Here is a 218-residue protein sequence, read N- to C-terminus: Small ribosomal subunit protein mS34 (218 aa).

The segment at 178–218 (RQKNGDPSTEEPMLSLERIRTDPWDYPENQEAKKKTKGTAV) is disordered.

The protein belongs to the mitochondrion-specific ribosomal protein mS34 family. Component of the mitochondrial ribosome small subunit (28S) which comprises a 12S rRNA and about 30 distinct proteins.

It is found in the mitochondrion. Required for mitochondrial translation, plays a role in maintaining the stability of the small ribosomal subunit and the 12S rRNA that are required for mitoribosome formation. This is Small ribosomal subunit protein mS34 from Bos taurus (Bovine).